A 668-amino-acid polypeptide reads, in one-letter code: Protein ENTREP3 (668 aa).

The next 3 helical transmembrane spans lie at 34-54 (LLTLGLVQVLLGILVVTFSMV), 67-87 (SCPSWAGFSLAFSGVVGIVSW), and 91-111 (FTLVISFFSLLSVLCVMLSMA). Asparagine 160 carries N-linked (GlcNAc...) asparagine glycosylation. A helical transmembrane segment spans residues 174–194 (LFSVCGLTICAAIICTLSAIV). Phosphoserine is present on residues serine 358 and serine 389. 3 disordered regions span residues 386–419 (FEESPLPRRPPRAARSYSCSAPEAPPPLGAPTAA), 442–503 (RVPR…SSDT), and 550–570 (SAEKRRPVPTFQKVPLPSGPA). Positions 398 to 407 (AARSYSCSAP) are enriched in low complexity. Serine 493 is subject to Phosphoserine. Serine 574 carries the phosphoserine modification. Disordered stretches follow at residues 597-620 (KAPDPSGTGAHGHKQVPRSLWGRP) and 645-668 (GRRLERGTRPHSLSLNGGSRETGL). Residues 655–668 (HSLSLNGGSRETGL) show a composition bias toward polar residues.

This sequence belongs to the ENTREP family. As to quaternary structure, may interact with WWOX. Widely expressed.

It localises to the membrane. The chain is Protein ENTREP3 from Homo sapiens (Human).